The following is a 259-amino-acid chain: MLDSVASKPELAELLTLTKTEQILRLAQINVELEPLSAQERVKWALENLDGEFAVSSSFGIQAAVMLHLVTQEKPDIPIILTDTGYLFAETYRFIDELTEKLNLNLKVYRAEQSAQWQEARYGKLWEQGVEGIEKYNKINKVEPMRRALKELNVGTWFSGLRREQSKSRAGLPILSIQNGVFKFLPVIDWTNKDVHYYLEQHGLTYHPLWEEGYLSVGDTHTTRKWEPGMSEEETRFFGLKRECGLHEDDGNEQDGSGI.

The active-site Nucleophile; cysteine thiosulfonate intermediate is Cys244.

Belongs to the PAPS reductase family. CysH subfamily.

Its subcellular location is the cytoplasm. It catalyses the reaction [thioredoxin]-disulfide + sulfite + adenosine 3',5'-bisphosphate + 2 H(+) = [thioredoxin]-dithiol + 3'-phosphoadenylyl sulfate. The protein operates within sulfur metabolism; hydrogen sulfide biosynthesis; sulfite from sulfate: step 3/3. Its function is as follows. Catalyzes the formation of sulfite from phosphoadenosine 5'-phosphosulfate (PAPS) using thioredoxin as an electron donor. This is Phosphoadenosine 5'-phosphosulfate reductase from Vibrio parahaemolyticus serotype O3:K6 (strain RIMD 2210633).